Consider the following 497-residue polypeptide: Succinate-semialdehyde dehydrogenase [NADP(+)] (497 aa).

The Proton acceptor role is filled by E264. The active-site Nucleophile is the C298.

This sequence belongs to the aldehyde dehydrogenase family. Homotetramer.

The protein localises to the cytoplasm. It catalyses the reaction succinate semialdehyde + NAD(+) + H2O = succinate + NADH + 2 H(+). The enzyme catalyses succinate semialdehyde + NADP(+) + H2O = succinate + NADPH + 2 H(+). Its pathway is amino-acid degradation; 4-aminobutanoate degradation. Inhibited by AMP, ADP anf ATP. Catalyzes the oxidation of succinate semialdehyde to succinate. Can utilize both NAD(+) or NADP(+) as a coenzyme, but has a 2.5-fold lower activity with NADP(+) than with NAD(+). Functions in a gamma-aminobutyrate (GABA) degradation pathway that allows growth utilizing GABA as a nitrogen source. Functions in the GABA shunt, which allows to bypass 2 reactions in the TCA cycle by removing alpha-ketoglutarate from the cycle and feeding succinate and NADH back into the cycle. The chain is Succinate-semialdehyde dehydrogenase [NADP(+)] from Saccharomyces cerevisiae (strain ATCC 204508 / S288c) (Baker's yeast).